The sequence spans 307 residues: tRNA(Met) cytidine acetate ligase (307 aa).

ATP is bound by residues Val-12–Gln-25, Gly-106, Asn-163, and Arg-188.

The protein belongs to the TmcAL family.

It is found in the cytoplasm. It catalyses the reaction cytidine(34) in elongator tRNA(Met) + acetate + ATP = N(4)-acetylcytidine(34) in elongator tRNA(Met) + AMP + diphosphate. Its function is as follows. Catalyzes the formation of N(4)-acetylcytidine (ac(4)C) at the wobble position of elongator tRNA(Met), using acetate and ATP as substrates. First activates an acetate ion to form acetyladenylate (Ac-AMP) and then transfers the acetyl group to tRNA to form ac(4)C34. This is tRNA(Met) cytidine acetate ligase from Mycoplasmopsis synoviae (strain 53) (Mycoplasma synoviae).